Reading from the N-terminus, the 277-residue chain is 2-dehydro-3-deoxyphosphooctonate aldolase (277 aa).

The protein belongs to the KdsA family.

It is found in the cytoplasm. It catalyses the reaction D-arabinose 5-phosphate + phosphoenolpyruvate + H2O = 3-deoxy-alpha-D-manno-2-octulosonate-8-phosphate + phosphate. The protein operates within carbohydrate biosynthesis; 3-deoxy-D-manno-octulosonate biosynthesis; 3-deoxy-D-manno-octulosonate from D-ribulose 5-phosphate: step 2/3. It functions in the pathway bacterial outer membrane biogenesis; lipopolysaccharide biosynthesis. The chain is 2-dehydro-3-deoxyphosphooctonate aldolase from Brucella anthropi (strain ATCC 49188 / DSM 6882 / CCUG 24695 / JCM 21032 / LMG 3331 / NBRC 15819 / NCTC 12168 / Alc 37) (Ochrobactrum anthropi).